We begin with the raw amino-acid sequence, 274 residues long: Bis(5'-nucleosyl)-tetraphosphatase, symmetrical (274 aa).

Belongs to the Ap4A hydrolase family.

The enzyme catalyses P(1),P(4)-bis(5'-adenosyl) tetraphosphate + H2O = 2 ADP + 2 H(+). Hydrolyzes diadenosine 5',5'''-P1,P4-tetraphosphate to yield ADP. The polypeptide is Bis(5'-nucleosyl)-tetraphosphatase, symmetrical (Buchnera aphidicola subsp. Acyrthosiphon pisum (strain 5A)).